Consider the following 533-residue polypeptide: Protein transport protein SEC9 (533 aa).

4 disordered regions span residues 1–32, 68–184, 200–246, and 259–284; these read MGFK…IATK, RPGA…MNAT, MAQD…KRAP, and PTNE…GQAP. Residues 11–24 show a composition bias toward basic and acidic residues; the sequence is PPEEDTPERNRDLL. The span at 92 to 102 shows a compositional bias: polar residues; sequence GNTSRVGQPQQ. Residues 157 to 172 show a composition bias toward gly residues; the sequence is GGPGNPYGGSTAGAGT. The span at 227-240 shows a compositional bias: low complexity; the sequence is RPQAAAETPRPQAA. T-SNARE coiled-coil homology domains are found at residues 318–380 and 470–532; these read RFTK…VAEL and DEME…LTNI.

It belongs to the SNAP-25 family.

The protein is Protein transport protein SEC9 (SEC9) of Eremothecium gossypii (strain ATCC 10895 / CBS 109.51 / FGSC 9923 / NRRL Y-1056) (Yeast).